We begin with the raw amino-acid sequence, 417 residues long: Hyaluronidase-3 (417 aa).

The signal sequence occupies residues 1 to 20; the sequence is MTTQLGPALVLGVALCLGCG. 5 cysteine pairs are disulfide-bonded: Cys-42/Cys-331, Cys-205/Cys-220, Cys-356/Cys-367, Cys-361/Cys-395, and Cys-397/Cys-406. A glycan (N-linked (GlcNAc...) asparagine) is linked at Asn-69. The Proton donor role is filled by Glu-129. A glycan (N-linked (GlcNAc...) asparagine) is linked at Asn-215. The 56-residue stretch at 352–407 folds into the EGF-like domain; the sequence is AAMACSHQRCHGHGRCARRDPGQMEAFLHLWPDGSLGDWKSFSCHCYWGWAGPTCQ.

The protein belongs to the glycosyl hydrolase 56 family. In terms of processing, N-glycosylated. In terms of tissue distribution, expressed in sperm. Highly expressed in epidermis of the skin, where it is expressed intracellularily in the deep horny layer (at protein level). Bone marrow, testis and kidney.

It localises to the secreted. It is found in the cell membrane. The protein resides in the cytoplasmic vesicle. Its subcellular location is the secretory vesicle. The protein localises to the acrosome. It localises to the endoplasmic reticulum. It is found in the early endosome. It carries out the reaction Random hydrolysis of (1-&gt;4)-linkages between N-acetyl-beta-D-glucosamine and D-glucuronate residues in hyaluronate.. Facilitates sperm penetration into the layer of cumulus cells surrounding the egg by digesting hyaluronic acid. Involved in induction of the acrosome reaction in the sperm. Involved in follicular atresia, the breakdown of immature ovarian follicles that are not selected to ovulate. Induces ovarian granulosa cell apoptosis, possibly via apoptotic signaling pathway involving CASP8 and CASP3 activation, and poly(ADP-ribose) polymerase (PARP) cleavage. Has no hyaluronidase activity in embryonic fibroblasts in vitro. Has no hyaluronidase activity in granulosa cells in vitro. This chain is Hyaluronidase-3 (HYAL3), found in Homo sapiens (Human).